A 620-amino-acid chain; its full sequence is U1 small nuclear ribonucleoprotein component SNU71 (620 aa).

Residues Asn59–Leu75 show a composition bias toward polar residues. Disordered stretches follow at residues Asn59–Ser82, Thr246–Leu270, Arg323–Tyr373, His428–Leu452, and Ser509–Asp537. A compositionally biased stretch (basic and acidic residues) spans Thr246–Leu256. The span at Asp258–Leu270 shows a compositional bias: polar residues. The stretch at Glu296–Glu385 forms a coiled coil. Over residues Thr335–Leu355 the composition is skewed to acidic residues. Basic and acidic residues-rich tracts occupy residues Ala356–Tyr373 and Phe431–Lys445. 2 positions are modified to phosphoserine: Ser512 and Ser514. Residues Glu517–Asp537 are compositionally biased toward basic and acidic residues.

Belongs to the SNU71 family. As to quaternary structure, component of the 18S U1 snRNP particle, a subcomplex of the spliceosome.

It is found in the cytoplasm. Its subcellular location is the nucleus. In terms of biological role, component of the U1 snRNP particle, which recognizes and binds the 5'-splice site of pre-mRNA. Together with other non-snRNP factors, U1 snRNP forms the spliceosomal commitment complex, that targets pre-mRNA to the splicing pathway. In Saccharomyces cerevisiae (strain ATCC 204508 / S288c) (Baker's yeast), this protein is U1 small nuclear ribonucleoprotein component SNU71 (SNU71).